We begin with the raw amino-acid sequence, 296 residues long: Probable AP endonuclease (296 aa).

An intrachain disulfide couples C16 to C20. The Zn(2+) site is built by H78, H115, E142, H182, H218, D231, H233, and E271.

This sequence belongs to the AP endonuclease 2 family. Zn(2+) is required as a cofactor.

The protein localises to the host nucleus. It localises to the host cytoplasm. The protein resides in the virion. In terms of biological role, endonuclease that plays a role in DNA repair. Cleaves phosphodiester bonds on the 5' side of apurinic or apyrimidinic sites (AP sites). In addition to endonuclease activity, the ASFV enzyme has a proofreading 3'-5' exonuclease activity that is considerably more efficient in the elimination of a mismatch than in that of a correctly paired base. Displays 3'-phosphatase and 3'-repair diesterase activities. The single nucleotide gaps generated by the AP endonuclease are filled by the viral AP endonuclease and DNA ligase. The chain is Probable AP endonuclease from Ornithodoros (relapsing fever ticks).